The sequence spans 564 residues: Mitochondrial distribution and morphology protein 34-1 (564 aa).

The region spanning 1–195 is the SMP-LTD domain; it reads MAFKFNWSPL…LPAIIHRLSL (195 aa). 2 stretches are compositionally biased toward polar residues: residues 297 to 322 and 329 to 352; these read PDQN…SQTG and DNAS…SSYG. Disordered regions lie at residues 297–408, 414–433, and 452–473; these read PDQN…VTSA, HEQP…DQSL, and DLSS…PFNT. The span at 359-371 shows a compositional bias: basic residues; it reads RHSRAHARRRKKR. Residues 383–394 are compositionally biased toward low complexity; it reads SDSASVSVSDES. Polar residues predominate over residues 396 to 408; that stretch reads YTESASAPSVTSA. Positions 452–466 are enriched in basic and acidic residues; it reads DLSSEIVRDRAEPSE.

It belongs to the MDM34 family. As to quaternary structure, component of the ER-mitochondria encounter structure (ERMES) or MDM complex, composed of mmm1, mdm10, mdm12 and mdm34.

It is found in the mitochondrion outer membrane. Component of the ERMES/MDM complex, which serves as a molecular tether to connect the endoplasmic reticulum (ER) and mitochondria. Components of this complex are involved in the control of mitochondrial shape and protein biogenesis, and function in nonvesicular lipid trafficking between the ER and mitochondria. Mdm34 is required for the interaction of the ER-resident membrane protein mmm1 and the outer mitochondrial membrane-resident beta-barrel protein mdm10. This is Mitochondrial distribution and morphology protein 34-1 from Penicillium rubens (strain ATCC 28089 / DSM 1075 / NRRL 1951 / Wisconsin 54-1255) (Penicillium chrysogenum).